The following is a 231-amino-acid chain: Orotidine 5'-phosphate decarboxylase (231 aa).

Residues D11, K33, 60 to 69 (DLKFHDIPNT), T120, R181, Q190, G210, and R211 contribute to the substrate site. The active-site Proton donor is the K62.

Belongs to the OMP decarboxylase family. Type 1 subfamily. Homodimer.

The catalysed reaction is orotidine 5'-phosphate + H(+) = UMP + CO2. It functions in the pathway pyrimidine metabolism; UMP biosynthesis via de novo pathway; UMP from orotate: step 2/2. Functionally, catalyzes the decarboxylation of orotidine 5'-monophosphate (OMP) to uridine 5'-monophosphate (UMP). This is Orotidine 5'-phosphate decarboxylase from Colwellia psychrerythraea (strain 34H / ATCC BAA-681) (Vibrio psychroerythus).